A 142-amino-acid polypeptide reads, in one-letter code: Alpha-lactalbumin (142 aa).

The N-terminal stretch at 1–19 (MMSFVSLLLVGILFHATQA) is a signal peptide. Residues 20-142 (EQLTKCEVFQ…KLDQWLCEKL (123 aa)) enclose the C-type lysozyme domain. Disulfide bonds link C25/C139, C47/C130, C80/C96, and C92/C110. N64 and N93 each carry an N-linked (GlcNAc...) asparagine glycan. K98, D101, D103, D106, and D107 together coordinate Ca(2+).

Belongs to the glycosyl hydrolase 22 family. As to quaternary structure, lactose synthase (LS) is a heterodimer of a catalytic component, beta1,4-galactosyltransferase (beta4Gal-T1) and a regulatory component, alpha-lactalbumin (LA). As to expression, mammary gland specific. Secreted in milk.

It is found in the secreted. Functionally, regulatory subunit of lactose synthase, changes the substrate specificity of galactosyltransferase in the mammary gland making glucose a good acceptor substrate for this enzyme. This enables LS to synthesize lactose, the major carbohydrate component of milk. In other tissues, galactosyltransferase transfers galactose onto the N-acetylglucosamine of the oligosaccharide chains in glycoproteins. The protein is Alpha-lactalbumin (LALBA) of Capra hircus (Goat).